The following is a 547-amino-acid chain: Heme-binding protein A (547 aa).

Residues 1–18 (MKLKATLTLAAATLVLAA) form the signal peptide. A lipid anchor (N-palmitoyl cysteine) is attached at Cys-19. Cys-19 carries the S-diacylglycerol cysteine lipid modification.

This sequence belongs to the bacterial solute-binding protein 5 family.

The protein resides in the cell inner membrane. Its function is as follows. Important role in heme acquisition or metabolism. The chain is Heme-binding protein A (hbpA) from Haemophilus influenzae (strain ATCC 51907 / DSM 11121 / KW20 / Rd).